Here is a 553-residue protein sequence, read N- to C-terminus: MNRQFTCKSGAANRGFSGCSAVLSGGSASSYRAGGKGLGGGFSSRSLYSLRSPRSISFNVASGSGRTGGYGFGRNRASGFAGSMFGGGALGPSNPSLCLPGGIHQVTVNKSLLAPLNVELDPEIQKVRAQEREQIKALNNKFASFIDKVRFLEQQNQVLQTKWELLQQLDLSNCRRNLEPVYEAHISSLQKQLDSLSGDRVRLDSELRGMRDAVEDCKKRYEEEINKRTTAENEFVVLKKDVDAAYMSKVELQAKVDALDGEIKFLKCLYEGEITQMQSHISDTSVVLSMDNNRNLDLDSIIAEVRAQYEDIALKSKAEAEMVYQTKFQELQLAAGRHGDDLKHTRNEISELTRLIQRLRSEIESVKKQCSNLETAIADAEQRGDCALKDAQAKLDDLERALHQAKEELARMLREHQELMSMKLALDIEIATYRKLLEGEECRMSGEHTNAVSISVISSSTTGAVGAGTSFGFSNPSTYGYRPSSVAGGYGILSGGCVTGSGNCSPRGDTKTRLGSASEFKEVSGKTLALGSPSKKTMRADRQSSISVQLWFS.

The tract at residues 1–130 (MNRQFTCKSG…DPEIQKVRAQ (130 aa)) is head. The tract at residues 131 to 166 (EREQIKALNNKFASFIDKVRFLEQQNQVLQTKWELL) is coil 1A. Positions 131–444 (EREQIKALNN…KLLEGEECRM (314 aa)) constitute an IF rod domain. Residues 167–185 (QQLDLSNCRRNLEPVYEAH) are linker 1. Positions 186–277 (ISSLQKQLDS…CLYEGEITQM (92 aa)) are coil 1B. The segment at 278–301 (QSHISDTSVVLSMDNNRNLDLDSI) is linker 12. The coil 2 stretch occupies residues 302–440 (IAEVRAQYED…ATYRKLLEGE (139 aa)). The tail stretch occupies residues 441–539 (ECRMSGEHTN…LGSPSKKTMR (99 aa)).

The protein belongs to the intermediate filament family. In terms of assembly, heterotetramer of two type I and two type II keratins.

Has a role in hair formation. Specific component of keratin intermediate filaments in the inner root sheath (IRS) of the hair follicle. The polypeptide is Keratin, type II cytoskeletal 73 (Krt73) (Rattus norvegicus (Rat)).